The following is a 175-amino-acid chain: MAKADKATAVADIAEQFKASTATVVTEYRGLTVANLAELRRALGDSATYTVAKNTLVKRAASEAGIEGLDELFAGPTAIAFVKGEAVDAAKAIKKFAKDNKALVIKGGYMDGKALSVADVEKIADLESREVLLAKLAGAMKGNLSKAAGLFNAPASQVARLAAALQEKKAGEEAA.

It belongs to the universal ribosomal protein uL10 family. In terms of assembly, part of the ribosomal stalk of the 50S ribosomal subunit. The N-terminus interacts with L11 and the large rRNA to form the base of the stalk. The C-terminus forms an elongated spine to which L12 dimers bind in a sequential fashion forming a multimeric L10(L12)X complex.

Forms part of the ribosomal stalk, playing a central role in the interaction of the ribosome with GTP-bound translation factors. This chain is Large ribosomal subunit protein uL10, found in Mycolicibacterium smegmatis (strain ATCC 700084 / mc(2)155) (Mycobacterium smegmatis).